Consider the following 369-residue polypeptide: S-(hydroxymethyl)glutathione dehydrogenase (369 aa).

7 residues coordinate Zn(2+): C40, H62, C92, C95, C98, C106, and C169.

The protein belongs to the zinc-containing alcohol dehydrogenase family. Class-III subfamily. As to quaternary structure, homodimer. Zn(2+) is required as a cofactor.

It localises to the cytoplasm. The enzyme catalyses S-(hydroxymethyl)glutathione + NADP(+) = S-formylglutathione + NADPH + H(+). The catalysed reaction is S-(hydroxymethyl)glutathione + NAD(+) = S-formylglutathione + NADH + H(+). It catalyses the reaction a primary alcohol + NAD(+) = an aldehyde + NADH + H(+). It carries out the reaction a secondary alcohol + NAD(+) = a ketone + NADH + H(+). The enzyme catalyses S-nitrosoglutathione + NADH + H(+) = S-(hydroxysulfenamide)glutathione + NAD(+). Its function is as follows. Has high formaldehyde dehydrogenase activity in the presence of glutathione and catalyzes the oxidation of normal alcohols in a reaction that is not GSH-dependent. In addition, hemithiolacetals other than those formed from GSH, including omega-thiol fatty acids, also are substrates. Also acts as a S-nitroso-glutathione reductase by catalyzing the NADH-dependent reduction of S-nitrosoglutathione. The chain is S-(hydroxymethyl)glutathione dehydrogenase (frmA) from Escherichia coli (strain ATCC 8739 / DSM 1576 / NBRC 3972 / NCIMB 8545 / WDCM 00012 / Crooks).